The sequence spans 939 residues: cGMP-dependent 3',5'-cyclic phosphodiesterase (939 aa).

A lipid anchor (N-myristoyl glycine) is attached at Gly-2. 2 S-palmitoyl cysteine lipidation sites follow: Cys-5 and Cys-11. Positions 16–38 (YPAARPAEPRGQQVFLKPDEPPP) are disordered. Ser-116 carries the post-translational modification Phosphoserine. The tract at residues 197–217 (PEAVQNTSVDASEDQKDEKGY) is disordered. 2 GAF domains span residues 236 to 373 (ATSL…HYTG) and 408 to 547 (DVSV…GISI). Residues Ser-430, Asp-445, Ile-464, Tyr-487, and Thr-498 each contribute to the 3',5'-cyclic GMP site. Residues 577–901 (SDDEYTKLLH…EHWTKVSHKF (325 aa)) form the PDEase domain. Catalysis depends on His-655, which acts as the Proton donor. Zn(2+) contacts are provided by His-659, His-695, Asp-696, and Asp-807. Mg(2+) is bound at residue Asp-696.

It belongs to the cyclic nucleotide phosphodiesterase family. PDE2 subfamily. Homodimer. It depends on Zn(2+) as a cofactor. Mg(2+) serves as cofactor. As to expression, expressed in brain and liver (at protein level).

The protein resides in the cytoplasm. It localises to the mitochondrion matrix. Its subcellular location is the mitochondrion inner membrane. It is found in the mitochondrion outer membrane. The protein localises to the cell membrane. The catalysed reaction is a nucleoside 3',5'-cyclic phosphate + H2O = a nucleoside 5'-phosphate + H(+). The enzyme catalyses 3',5'-cyclic GMP + H2O = GMP + H(+). It carries out the reaction 3',5'-cyclic AMP + H2O = AMP + H(+). Its activity is regulated as follows. The 3',5'-cyclic-AMP phosphodiesterase activity is stimulated by 3',5'-cyclic GMP. Specifically inhibited by Bay 60-7550. In terms of biological role, cGMP-activated cyclic nucleotide phosphodiesterase with a dual-specificity for the second messengers cAMP and cGMP, which are key regulators of many important physiological processes. Has a higher efficiency with cGMP compared to cAMP. Plays a role in cell growth and migration. Its function is as follows. Regulates mitochondrial cAMP levels and respiration. Involved in the regulation of mitochondria morphology/dynamics and apoptotic cell death via local modulation of cAMP/PKA signaling in the mitochondrion, including the monitoring of local cAMP levels at the outer mitochondrial membrane and of PKA-dependent phosphorylation of DNM1L. This is cGMP-dependent 3',5'-cyclic phosphodiesterase from Mus musculus (Mouse).